The chain runs to 392 residues: Cell division protein DivIB (392 aa).

Residues methionine 1–glutamate 87 are disordered. At methionine 1–methionine 131 the chain is on the cytoplasmic side. Basic and acidic residues predominate over residues lysine 14–alanine 32. Positions threonine 58 to asparagine 76 are enriched in acidic residues. The helical transmembrane segment at tryptophan 132–leucine 152 threads the bilayer. In terms of domain architecture, POTRA spans serine 153–histidine 224. At serine 153–asparagine 392 the chain is on the extracellular side. The segment at isoleucine 368 to asparagine 392 is disordered.

Belongs to the FtsQ/DivIB family. DivIB subfamily.

The protein localises to the cell membrane. Functionally, cell division protein that may be involved in stabilizing or promoting the assembly of the division complex. The chain is Cell division protein DivIB from Lactococcus lactis subsp. lactis (strain IL1403) (Streptococcus lactis).